The chain runs to 514 residues: Na(+)/H(+) antiporter NhaB (514 aa).

The next 12 membrane-spanning stretches (helical) occupy residues 23-43 (LALLVFLIVNPFIFLANPFIA), 63-83 (PLLPGGLLAIEAVIIGMTSAA), 97-117 (LLLMFMVAGIYFMKQLLLFIF), 120-140 (LLLSIRSKMVLSLAFCVAAAF), 144-164 (FLDALTVVAVVISVAVGFYGI), 202-222 (LMMHAGVGTALGGVMTMVGEP), 238-258 (FFLRMSPVTVPVLVCGLLTCM), 303-323 (AVIGVWLVTALALHLAEVGLI), 357-377 (LTVFFSIVAVIIDQHLFAPII), 391-411 (LFYLFNGLLSSISDNVFVGTI), 447-467 (ATPNGQAAFLFLLTSALAPLI), and 475-495 (VWMALPYTIVLTLIGLLCVEF).

The protein belongs to the NhaB Na(+)/H(+) (TC 2.A.34) antiporter family.

Its subcellular location is the cell inner membrane. It carries out the reaction 2 Na(+)(in) + 3 H(+)(out) = 2 Na(+)(out) + 3 H(+)(in). Na(+)/H(+) antiporter that extrudes sodium in exchange for external protons. The protein is Na(+)/H(+) antiporter NhaB of Salmonella choleraesuis (strain SC-B67).